The primary structure comprises 258 residues: Sec-independent protein translocase protein TatC (258 aa).

Residues 2–23 (SVEDTQPLITHLIELRKRLLNC) are Cytoplasmic-facing. The chain crosses the membrane as a helical span at residues 24 to 44 (IISVIVIFLCLVYFANDIYHL). The Periplasmic segment spans residues 45 to 75 (VSAPLIKQLPQGSTMIATDVASPFFTPIKLT). A helical membrane pass occupies residues 76–96 (FMVSLILSAPVILYQVWAFIA). Over 97–115 (PALYKHERRLVVPLLVSSS) the chain is Cytoplasmic. The chain crosses the membrane as a helical span at residues 116–136 (LLFYIGMAFAYFVVFPLAFGF). The Periplasmic portion of the chain corresponds to 137-156 (LANTAPEGVQVSTDIASYLS). Residues 157 to 177 (FVMALFMAFGVSFEVPVAIVL) traverse the membrane as a helical segment. The Cytoplasmic segment spans residues 178 to 192 (LCWMGITSPEDLRKK). The chain crosses the membrane as a helical span at residues 193–210 (RPYVLVGAFVVGMLLTPP). Position 211 (Asp-211) is a topological domain, periplasmic. The chain crosses the membrane as a helical span at residues 212-232 (VFSQTLLAIPMYCLFEIGVFF). Residues 233-258 (SRFYVGKGRNREEENDAEAESEKTEE) are Cytoplasmic-facing.

It belongs to the TatC family. As to quaternary structure, the Tat system comprises two distinct complexes: a TatABC complex, containing multiple copies of TatA, TatB and TatC subunits, and a separate TatA complex, containing only TatA subunits. Substrates initially bind to the TatABC complex, which probably triggers association of the separate TatA complex to form the active translocon.

It localises to the cell inner membrane. In terms of biological role, part of the twin-arginine translocation (Tat) system that transports large folded proteins containing a characteristic twin-arginine motif in their signal peptide across membranes. Together with TatB, TatC is part of a receptor directly interacting with Tat signal peptides. This chain is Sec-independent protein translocase protein TatC, found in Escherichia coli O6:H1 (strain CFT073 / ATCC 700928 / UPEC).